Reading from the N-terminus, the 400-residue chain is Acetate kinase (400 aa).

Mg(2+) is bound at residue N7. Position 14 (K14) interacts with ATP. Residue R92 coordinates substrate. The active-site Proton donor/acceptor is D149. ATP-binding positions include 209–213, 283–285, and 331–335; these read HLGNG, DAR, and GMGEN. A Mg(2+)-binding site is contributed by E385.

The protein belongs to the acetokinase family. As to quaternary structure, homodimer. It depends on Mg(2+) as a cofactor. Requires Mn(2+) as cofactor.

It localises to the cytoplasm. The catalysed reaction is acetate + ATP = acetyl phosphate + ADP. Its pathway is metabolic intermediate biosynthesis; acetyl-CoA biosynthesis; acetyl-CoA from acetate: step 1/2. Functionally, catalyzes the formation of acetyl phosphate from acetate and ATP. Can also catalyze the reverse reaction. The sequence is that of Acetate kinase from Helicobacter acinonychis (strain Sheeba).